Consider the following 234-residue polypeptide: Ribonuclease HII (234 aa).

The RNase H type-2 domain occupies 16 to 207; sequence ALVAGVDEAG…VRRMLTPKAI (192 aa). 3 residues coordinate a divalent metal cation: Asp-22, Glu-23, and Asp-115.

This sequence belongs to the RNase HII family. Requires Mn(2+) as cofactor. Mg(2+) serves as cofactor.

The protein resides in the cytoplasm. The catalysed reaction is Endonucleolytic cleavage to 5'-phosphomonoester.. Its function is as follows. Endonuclease that specifically degrades the RNA of RNA-DNA hybrids. This is Ribonuclease HII from Xylella fastidiosa (strain M23).